The primary structure comprises 313 residues: 3-O-acetylpapaveroxine carboxylesterase CXE2 (313 aa).

Residues 72 to 74 (HGG) carry the Involved in the stabilization of the negatively charged intermediate by the formation of the oxyanion hole motif. Active-site residues include Ser-158, Asp-262, and His-292.

This sequence belongs to the 'GDXG' lipolytic enzyme family.

The catalysed reaction is 3-O-acetylpapaveroxine + H2O = narcotine hemiacetal + acetate + H(+). It participates in alkaloid biosynthesis. Its function is as follows. Carboxylesterase involved in the biosynthesis of the benzylisoquinoline alkaloid noscapine. Converts 3-O-acetylpapaveroxine to narcotine hemiacetal. The chain is 3-O-acetylpapaveroxine carboxylesterase CXE2 from Papaver somniferum (Opium poppy).